The primary structure comprises 256 residues: Trans-aconitate 2-methyltransferase (256 aa).

It belongs to the methyltransferase superfamily. Tam family.

The protein resides in the cytoplasm. The enzyme catalyses trans-aconitate + S-adenosyl-L-methionine = (E)-3-(methoxycarbonyl)pent-2-enedioate + S-adenosyl-L-homocysteine. Functionally, catalyzes the S-adenosylmethionine monomethyl esterification of trans-aconitate. This is Trans-aconitate 2-methyltransferase from Rhodopseudomonas palustris (strain BisB5).